We begin with the raw amino-acid sequence, 461 residues long: MLKIFNTLTRQKEEFKPIHAGEVGMYVCGITVYDLCHIGHGRTFVAFDVVARYLRFLGYKLKYVRNITDIDDKIIKRANENGESFVALVDRMIAEMHQDFDALNILRPDSEPRATHHIQEIIEITRTLIEKGHAYVADNGDVMFDVPTDPTYGQLSRQDLEQLQAGARVDVVDVKRNPMDFVLWKMSKEGEPSWPSPWGEGRPGWHIECSAMNCKQLGNHFDIHGGGSDLMFPHHENEIAQSTCAHDGEYVNYWMHSGMVMVDREKMSKSLGNFFTVRDVLKYYDAETVRYFLMSGHYRSQLNYSEENLKQARASLERLYTALRGTDKSAAPAGGEAFEARFVEAMNDDFNTPEAYSVLFDMAREVNRLKSEDMTAANAMASHLRKISGVLGLLEQEPDAFLQSGAQADDGEVAEIEALIQQRLDARKAKDWAAADAARDRLTEMGIILEDGPQGTTWRRK.

A Zn(2+)-binding site is contributed by Cys28. Positions 30–40 (ITVYDLCHIGH) match the 'HIGH' region motif. 3 residues coordinate Zn(2+): Cys209, His234, and Glu238. The 'KMSKS' region signature appears at 266-270 (KMSKS). Lys269 contributes to the ATP binding site.

It belongs to the class-I aminoacyl-tRNA synthetase family. In terms of assembly, monomer. The cofactor is Zn(2+).

The protein localises to the cytoplasm. The enzyme catalyses tRNA(Cys) + L-cysteine + ATP = L-cysteinyl-tRNA(Cys) + AMP + diphosphate. The sequence is that of Cysteine--tRNA ligase from Salmonella arizonae (strain ATCC BAA-731 / CDC346-86 / RSK2980).